A 277-amino-acid polypeptide reads, in one-letter code: Large ribosomal subunit protein uL2 (277 aa).

2 disordered regions span residues 36–55 and 213–277; these read PLPK…RHHG and WKGI…RKKK.

It belongs to the universal ribosomal protein uL2 family. Part of the 50S ribosomal subunit. Forms a bridge to the 30S subunit in the 70S ribosome.

In terms of biological role, one of the primary rRNA binding proteins. Required for association of the 30S and 50S subunits to form the 70S ribosome, for tRNA binding and peptide bond formation. It has been suggested to have peptidyltransferase activity; this is somewhat controversial. Makes several contacts with the 16S rRNA in the 70S ribosome. This is Large ribosomal subunit protein uL2 from Staphylococcus saprophyticus subsp. saprophyticus (strain ATCC 15305 / DSM 20229 / NCIMB 8711 / NCTC 7292 / S-41).